Consider the following 342-residue polypeptide: Voltage-gated hydrogen channel 1 (342 aa).

Disordered regions lie at residues 1–20 and 74–102; these read MEGDNCNKSRHKSHNMINPN and FNDNNNHERPAPQEQSTQNTMISMQSEQK. The Cytoplasmic segment spans residues 1-148; the sequence is MEGDNCNKSR…KLRHILHSKP (148 aa). The span at 86–102 shows a compositional bias: polar residues; that stretch reads QEQSTQNTMISMQSEQK. The chain crosses the membrane as a helical span at residues 149–169; sequence IHVAIIVLVVLDSFLVVGELL. Topologically, residues 170–185 are extracellular; it reads IDLKVIIVPHGNPAPE. A helical membrane pass occupies residues 186 to 208; sequence ILHGFSLSILSIFMVEIALKIIA. Residues 209–217 are Cytoplasmic-facing; it reads DHRHFIHHK. Residues 218–238 form a helical membrane-spanning segment; sequence VEVLDAVVVVISFGVDIALIF. Over 239–247 the chain is Extracellular; the sequence is VGESEALAA. The chain crosses the membrane as a helical span at residues 248 to 268; sequence IGLLVILRLWRVFRIINGIIV. The Cytoplasmic segment spans residues 269-342; that stretch reads TVKTKADDRV…HSTTTASADV (74 aa). Residues 271 to 315 are a coiled coil; that stretch reads KTKADDRVHEIKKKNSELELQIHNLEEKLSQKEQDMSRLHEILRC.

This sequence belongs to the hydrogen channel family. Homodimer.

It localises to the membrane. The protein resides in the cell membrane. Its activity is regulated as follows. Less sensitive to zinc ions as compared to the mammalian homologs. Mediates the voltage-dependent proton permeability of excitable membranes. Forms a proton-selective channel through which protons may pass in accordance with their electrochemical gradient. This Ciona intestinalis (Transparent sea squirt) protein is Voltage-gated hydrogen channel 1 (HVCN1).